The chain runs to 285 residues: AT-hook motif nuclear-localized protein 21 (285 aa).

Residues 17-95 (DGGGGGQFTT…GSKNKPKPPV (79 aa)) are disordered. The segment covering 39–50 (NHHHHHHNHNHH) has biased composition (basic residues). Gly residues predominate over residues 63–73 (GLGGGGGGGSG). Residues 78-90 (RRPRGRPAGSKNK) constitute a DNA-binding region (a.T hook). The PPC domain maps to 102–238 (ANTLRAHILE…EHEEHLQSGG (137 aa)).

In terms of tissue distribution, preferentially expressed in roots, but also in flowers and leaves. Detected in the inflorescence meristem, floral primordia and developing reproductive organs.

It localises to the nucleus. Its subcellular location is the nucleoplasm. In terms of biological role, transcription factor that specifically binds AT-rich DNA sequences related to the nuclear matrix attachment regions (MARs). Binds to the MARs present in the ETTIN (ETT) promoter leading to a negative regulation of its gene expression. Functions as a molecular node downstream of the homeotic protein AGAMOUS (AG), regulating patterning and differentiation of reproductive organs. Acts as a chromatin remodeling factor that modifies the architecture of ETTIN (ETT) chromatin by modulating H3 methylation leading to the regulation of ETT expression. Seems to be involved in the regulation of a set of reproductives genes including CRABS CLAW (CRC), JAGGED (JAG) and KNUCKLES (KNU). This Arabidopsis thaliana (Mouse-ear cress) protein is AT-hook motif nuclear-localized protein 21.